A 265-amino-acid chain; its full sequence is Glutamate racemase (265 aa).

Substrate contacts are provided by residues Asp9 to Ser10 and Tyr41 to Gly42. The active-site Proton donor/acceptor is the Cys72. Asn73–Thr74 serves as a coordination point for substrate. The active-site Proton donor/acceptor is Cys183. Residue Thr184–His185 coordinates substrate.

This sequence belongs to the aspartate/glutamate racemases family.

It carries out the reaction L-glutamate = D-glutamate. The protein operates within cell wall biogenesis; peptidoglycan biosynthesis. Provides the (R)-glutamate required for cell wall biosynthesis. In Lysinibacillus sphaericus (strain C3-41), this protein is Glutamate racemase.